Consider the following 402-residue polypeptide: Putative F-box protein At3g23960 (402 aa).

A disordered region spans residues 1 to 23 (MRSRQLHNVSEDRETLSRRNKRS). The F-box domain occupies 26–73 (SLNGHIPIDLLIEIFLKLPVKSIATCRSVSKFWTYVLGRQDFTELFLT).

In Arabidopsis thaliana (Mouse-ear cress), this protein is Putative F-box protein At3g23960.